The primary structure comprises 545 residues: Hydroxylamine reductase (545 aa).

[4Fe-4S] cluster contacts are provided by Cys3, Cys6, Cys15, and Cys21. Hybrid [4Fe-2O-2S] cluster is bound by residues His241, Glu265, Cys309, Cys396, Cys424, Cys449, Glu483, and Lys485. Cys396 is subject to Cysteine persulfide.

This sequence belongs to the HCP family. [4Fe-4S] cluster is required as a cofactor. Requires hybrid [4Fe-2O-2S] cluster as cofactor.

It is found in the cytoplasm. It carries out the reaction A + NH4(+) + H2O = hydroxylamine + AH2 + H(+). In terms of biological role, catalyzes the reduction of hydroxylamine to form NH(3) and H(2)O. The chain is Hydroxylamine reductase from Zymomonas mobilis subsp. mobilis (strain ATCC 31821 / ZM4 / CP4).